A 422-amino-acid chain; its full sequence is Histone deacetylase B (422 aa).

Asp-102 serves as a coordination point for substrate. The active-site Proton acceptor is His-144. Gly-152 provides a ligand contact to substrate. A divalent metal cation-binding residues include Asp-179, His-181, and Asp-268. Tyr-307 lines the substrate pocket. Residues 399–422 are disordered; it reads IDFDRDEDSKENMDKRKKKHNDFS. The span at 413 to 422 shows a compositional bias: basic residues; sequence KRKKKHNDFS.

It belongs to the histone deacetylase family. HD type 1 subfamily.

It localises to the nucleus. It is found in the cytoplasm. The catalysed reaction is N(6)-acetyl-L-lysyl-[histone] + H2O = L-lysyl-[histone] + acetate. Its activity is inhibited by trichostatin A (TSA), a well known histone deacetylase inhibitor. Cytosolic activity is refractory to inhibition by TSA, while the nuclear activity is inhibited completely. Its function is as follows. Responsible for the deacetylation of lysine residues on the N-terminal part of the core histones (H2A, H2B, H3 and H4). Histone deacetylation plays an important role in transcriptional regulation, cell cycle progression and developmental events. Histone deacetylases act via the formation of large multiprotein complexes. May play a role in the regulation of the timing of gene expression during the development and in the definition aspects of the phenotype that mediate social behavior in genetically heterogeneous groups. The polypeptide is Histone deacetylase B (hdaB) (Dictyostelium discoideum (Social amoeba)).